A 213-amino-acid polypeptide reads, in one-letter code: Pyridoxine/pyridoxamine 5'-phosphate oxidase (213 aa).

Residues 8 to 11 (RKNY) and Lys-66 contribute to the substrate site. FMN is bound by residues 61–66 (RIVLIK), 76–77 (FT), Arg-82, Lys-83, and Gln-105. Substrate is bound by residues Tyr-123, Arg-127, and Ser-131. FMN contacts are provided by residues 140–141 (QS) and Trp-184. 190-192 (RLH) provides a ligand contact to substrate. Arg-194 contributes to the FMN binding site.

The protein belongs to the pyridoxamine 5'-phosphate oxidase family. Homodimer. FMN serves as cofactor.

The enzyme catalyses pyridoxamine 5'-phosphate + O2 + H2O = pyridoxal 5'-phosphate + H2O2 + NH4(+). It carries out the reaction pyridoxine 5'-phosphate + O2 = pyridoxal 5'-phosphate + H2O2. It functions in the pathway cofactor metabolism; pyridoxal 5'-phosphate salvage; pyridoxal 5'-phosphate from pyridoxamine 5'-phosphate: step 1/1. The protein operates within cofactor metabolism; pyridoxal 5'-phosphate salvage; pyridoxal 5'-phosphate from pyridoxine 5'-phosphate: step 1/1. In terms of biological role, catalyzes the oxidation of either pyridoxine 5'-phosphate (PNP) or pyridoxamine 5'-phosphate (PMP) into pyridoxal 5'-phosphate (PLP). The chain is Pyridoxine/pyridoxamine 5'-phosphate oxidase from Paraburkholderia phytofirmans (strain DSM 17436 / LMG 22146 / PsJN) (Burkholderia phytofirmans).